Consider the following 347-residue polypeptide: NADH-ubiquinone oxidoreductase chain 2 (347 aa).

10 consecutive transmembrane segments (helical) span residues 1 to 21 (MTPM…TLTL), 26 to 46 (WLLM…LLTY), 56 to 76 (AIKY…AASL), 96 to 116 (GIMT…YWVP), 153 to 171 (ILLT…NGLN), 178 to 198 (VMAY…IYFP), 199 to 219 (TLTT…FTVF), 237 to 257 (APIM…LPPL), 277 to 297 (IMAT…MRII), and 326 to 346 (LPTL…FITL).

It belongs to the complex I subunit 2 family. Core subunit of respiratory chain NADH dehydrogenase (Complex I) which is composed of 45 different subunits. Interacts with TMEM242.

Its subcellular location is the mitochondrion inner membrane. The enzyme catalyses a ubiquinone + NADH + 5 H(+)(in) = a ubiquinol + NAD(+) + 4 H(+)(out). Core subunit of the mitochondrial membrane respiratory chain NADH dehydrogenase (Complex I) which catalyzes electron transfer from NADH through the respiratory chain, using ubiquinone as an electron acceptor. Essential for the catalytic activity and assembly of complex I. This is NADH-ubiquinone oxidoreductase chain 2 from Ornithorhynchus anatinus (Duckbill platypus).